Reading from the N-terminus, the 81-residue chain is Small ribosomal subunit protein bS20 (81 aa).

It belongs to the bacterial ribosomal protein bS20 family.

Functionally, binds directly to 16S ribosomal RNA. The chain is Small ribosomal subunit protein bS20 from Mycoplasma mycoides subsp. mycoides SC (strain CCUG 32753 / NCTC 10114 / PG1).